The primary structure comprises 483 residues: Altronate oxidoreductase (483 aa).

18-29 (IIQFGEGNFLRA) lines the NAD(+) pocket.

Belongs to the mannitol dehydrogenase family. UxaB subfamily.

It catalyses the reaction D-altronate + NAD(+) = keto-D-tagaturonate + NADH + H(+). It functions in the pathway carbohydrate metabolism; pentose and glucuronate interconversion. This is Altronate oxidoreductase from Klebsiella pneumoniae (strain 342).